Here is a 610-residue protein sequence, read N- to C-terminus: UvrABC system protein C (610 aa).

Positions 16 to 94 (SQPGVYRMYD…IKLYQPRYNV (79 aa)) constitute a GIY-YIG domain. Residues 204–239 (DQVLTQLISRMETASQNLEFEEAARIRDQIQAVRRV) enclose the UVR domain.

The protein belongs to the UvrC family. As to quaternary structure, interacts with UvrB in an incision complex.

It localises to the cytoplasm. Its function is as follows. The UvrABC repair system catalyzes the recognition and processing of DNA lesions. UvrC both incises the 5' and 3' sides of the lesion. The N-terminal half is responsible for the 3' incision and the C-terminal half is responsible for the 5' incision. The protein is UvrABC system protein C of Escherichia coli (strain UTI89 / UPEC).